The sequence spans 533 residues: MEQKNLNINQASGSKINTELAVPIFQSRRRHRPRQGLKRKKGFKRDDDSGGSSESSNEDMRDNIPIVSGRKKTVRLNRLQRESEQFENSALKDINVEYQSNLSATGESVNTTTVSAINEDTREVILGRPSPKLANQSTLPTELFQSQNDYSRFLPKRKDFEKKSQVGPVLSSNASTVRMNTIIDYQPDVCKDYKLTGYCGYGDTCKFLHMREDYKAGWQLDREWDSVQEKYKKGAKLEEGMVKNEKKEDIPFVCLICKKDYRSPIATTCGHHFCEQCAITRYRKTPTCIQCGADTKGLFSVDKNFDRLLKNRKSKNDEAVKQKVGGFESNNSATTEVSERKDREASFQGFADTLAKPNTSAQQKMPSLGDNSNTIISKYFIREITESNIVHFKRLVRVVLEASYSDKFYRLVLKNPDYARIATFEDKFVGAISSLVAEDNSLYVTVLCVLAPYRCLGIGSLLIDHVKKTAINNNIDRISLHVQTTNESVIKWYTAHGFKIVKQINDFYRRLENKSAFYMVCPLSAHNNIISNH.

The segment covering 1–17 (MEQKNLNINQASGSKIN) has biased composition (polar residues). A disordered region spans residues 1–69 (MEQKNLNINQ…MRDNIPIVSG (69 aa)). Positions 27 to 43 (SRRRHRPRQGLKRKKGF) are enriched in basic residues. The segment at 184-212 (DYQPDVCKDYKLTGYCGYGDTCKFLHMRE) adopts a C3H1-type zinc-finger fold. The RING-type zinc finger occupies 254–292 (CLICKKDYRSPIATTCGHHFCEQCAITRYRKTPTCIQCG). Residues 379–524 (YFIREITESN…SAFYMVCPLS (146 aa)) form the N-acetyltransferase domain.

It belongs to the CWC24 family. Belongs to the 40S cdc5-associated complex (or cwf complex), a spliceosome sub-complex reminiscent of a late-stage spliceosome composed of the U2, U5 and U6 snRNAs and at least brr2, cdc5, cwf2/prp3, cwf3/syf1, cwf4/syf3, cwf5/ecm2, spp42/cwf6, cwf7/spf27, cwf8, cwf9, cwf10, cwf11, cwf12, prp45/cwf13, cwf14, cwf15, cwf16, cwf17, cwf18, cwf19, cwf20, cwf21, cwf22, cwf23, cwf24, cwf25, cwf26, cyp7/cwf27, cwf28, cwf29/ist3, lea1, msl1, prp5/cwf1, prp10, prp12/sap130, prp17, prp22, sap61, sap62, sap114, sap145, slu7, smb1, smd1, smd3, smf1, smg1 and syf2.

It is found in the nucleus. Its function is as follows. Involved in mRNA splicing. The protein is Pre-mRNA-splicing factor cwf24 (cwf24) of Schizosaccharomyces pombe (strain 972 / ATCC 24843) (Fission yeast).